The sequence spans 652 residues: DNA ligase (652 aa).

Residues 29-33 (DSEYD), 78-79 (SL), and glutamate 107 contribute to the NAD(+) site. The N6-AMP-lysine intermediate role is filled by lysine 109. NAD(+)-binding residues include arginine 130, glutamate 164, lysine 278, and lysine 302. 4 residues coordinate Zn(2+): cysteine 395, cysteine 398, cysteine 413, and cysteine 418. In terms of domain architecture, BRCT spans 577–652 (VADAALSGLT…VRDEAWLESL (76 aa)).

Belongs to the NAD-dependent DNA ligase family. LigA subfamily. The cofactor is Mg(2+). Mn(2+) serves as cofactor.

The enzyme catalyses NAD(+) + (deoxyribonucleotide)n-3'-hydroxyl + 5'-phospho-(deoxyribonucleotide)m = (deoxyribonucleotide)n+m + AMP + beta-nicotinamide D-nucleotide.. Its function is as follows. DNA ligase that catalyzes the formation of phosphodiester linkages between 5'-phosphoryl and 3'-hydroxyl groups in double-stranded DNA using NAD as a coenzyme and as the energy source for the reaction. It is essential for DNA replication and repair of damaged DNA. The protein is DNA ligase of Streptococcus pneumoniae (strain Hungary19A-6).